Reading from the N-terminus, the 129-residue chain is ATP synthase epsilon chain (129 aa).

Belongs to the ATPase epsilon chain family. As to quaternary structure, F-type ATPases have 2 components, CF(1) - the catalytic core - and CF(0) - the membrane proton channel. CF(1) has five subunits: alpha(3), beta(3), gamma(1), delta(1), epsilon(1). CF(0) has three main subunits: a, b and c.

Its subcellular location is the cell inner membrane. Functionally, produces ATP from ADP in the presence of a proton gradient across the membrane. The protein is ATP synthase epsilon chain of Nitratiruptor sp. (strain SB155-2).